The sequence spans 380 residues: Crotonobetainyl-CoA reductase (380 aa).

It belongs to the acyl-CoA dehydrogenase family. As to quaternary structure, homotetramer. The cofactor is FAD.

It is found in the cytoplasm. It carries out the reaction 4-(trimethylamino)butanoyl-CoA + oxidized [electron-transfer flavoprotein] + H(+) = crotonobetainyl-CoA + reduced [electron-transfer flavoprotein]. It participates in amine and polyamine metabolism; carnitine metabolism. Functionally, catalyzes the reduction of crotonobetainyl-CoA to gamma-butyrobetainyl-CoA. The protein is Crotonobetainyl-CoA reductase of Salmonella arizonae (strain ATCC BAA-731 / CDC346-86 / RSK2980).